We begin with the raw amino-acid sequence, 333 residues long: NADH-quinone oxidoreductase subunit H (333 aa).

Transmembrane regions (helical) follow at residues 15–35 (IALF…FVTY), 88–108 (YVLA…VLPF), 117–137 (IGVG…GVVA), 165–185 (LVMS…VDIV), 191–211 (VWFI…AVAE), 241–261 (FFML…TILF), 274–294 (IPGA…LIWF), and 313–333 (VLLP…AWFF).

It belongs to the complex I subunit 1 family. In terms of assembly, NDH-1 is composed of 14 different subunits. Subunits NuoA, H, J, K, L, M, N constitute the membrane sector of the complex.

The protein resides in the cell membrane. It carries out the reaction a quinone + NADH + 5 H(+)(in) = a quinol + NAD(+) + 4 H(+)(out). Functionally, NDH-1 shuttles electrons from NADH, via FMN and iron-sulfur (Fe-S) centers, to quinones in the respiratory chain. The immediate electron acceptor for the enzyme in this species is believed to be ubiquinone. Couples the redox reaction to proton translocation (for every two electrons transferred, four hydrogen ions are translocated across the cytoplasmic membrane), and thus conserves the redox energy in a proton gradient. This subunit may bind ubiquinone. This chain is NADH-quinone oxidoreductase subunit H, found in Geobacillus kaustophilus (strain HTA426).